We begin with the raw amino-acid sequence, 738 residues long: 1,4-alpha-glucan branching enzyme GlgB (738 aa).

The Nucleophile role is filled by aspartate 399. Glutamate 452 acts as the Proton donor in catalysis.

This sequence belongs to the glycosyl hydrolase 13 family. GlgB subfamily. Monomer.

It catalyses the reaction Transfers a segment of a (1-&gt;4)-alpha-D-glucan chain to a primary hydroxy group in a similar glucan chain.. It participates in glycan biosynthesis; glycogen biosynthesis. Its function is as follows. Catalyzes the formation of the alpha-1,6-glucosidic linkages in glycogen by scission of a 1,4-alpha-linked oligosaccharide from growing alpha-1,4-glucan chains and the subsequent attachment of the oligosaccharide to the alpha-1,6 position. The chain is 1,4-alpha-glucan branching enzyme GlgB from Chlamydia trachomatis serovar A (strain ATCC VR-571B / DSM 19440 / HAR-13).